The sequence spans 311 residues: Probable flavin reductase (311 aa).

Residues 38 to 41 (TANS), 55 to 61 (CLAKSSR), 88 to 89 (FA), and R95 contribute to the FMN site.

It belongs to the non-flavoprotein flavin reductase family.

In Rhizobium meliloti (strain 1021) (Ensifer meliloti), this protein is Probable flavin reductase.